Consider the following 165-residue polypeptide: Nucleotide-binding protein MXAN_1478 (165 aa).

The protein belongs to the YajQ family.

Its function is as follows. Nucleotide-binding protein. The protein is Nucleotide-binding protein MXAN_1478 of Myxococcus xanthus (strain DK1622).